The primary structure comprises 144 residues: Large ribosomal subunit protein uL15 (144 aa).

The disordered stretch occupies residues 1–57 (MELNNIKPADGAKKDKRRVGRGIGSGLGKTAGRGHKGQKSRAGGFHKVGFEGGQMPM). The span at 21–31 (RGIGSGLGKTA) shows a compositional bias: gly residues.

Belongs to the universal ribosomal protein uL15 family. Part of the 50S ribosomal subunit.

In terms of biological role, binds to the 23S rRNA. In Thiobacillus denitrificans (strain ATCC 25259 / T1), this protein is Large ribosomal subunit protein uL15.